The chain runs to 178 residues: Endoribonuclease YbeY (178 aa).

The Zn(2+) site is built by H118, H122, and H128. The segment at 156–178 is disordered; the sequence is YQQDRQDERDRRLLDKSRYFDEP. Positions 159-178 are enriched in basic and acidic residues; that stretch reads DRQDERDRRLLDKSRYFDEP.

The protein belongs to the endoribonuclease YbeY family. Zn(2+) is required as a cofactor.

Its subcellular location is the cytoplasm. Its function is as follows. Single strand-specific metallo-endoribonuclease involved in late-stage 70S ribosome quality control and in maturation of the 3' terminus of the 16S rRNA. The sequence is that of Endoribonuclease YbeY from Mycobacterium marinum (strain ATCC BAA-535 / M).